The chain runs to 127 residues: uncharacterized protein (127 aa).

Transmembrane regions (helical) follow at residues 13 to 35 (ILLLISIFFLVCIISLVGIGIIF) and 57 to 81 (AVLIVLGVFAICFMIIQLVISIMIW).

Its subcellular location is the cell membrane. This is an uncharacterized protein from Mycoplasma genitalium (strain ATCC 33530 / DSM 19775 / NCTC 10195 / G37) (Mycoplasmoides genitalium).